We begin with the raw amino-acid sequence, 299 residues long: Acetylglutamate kinase (299 aa).

Substrate contacts are provided by residues 72 to 73 (GG), Arg94, and Asn196.

The protein belongs to the acetylglutamate kinase family. ArgB subfamily.

It localises to the cytoplasm. The catalysed reaction is N-acetyl-L-glutamate + ATP = N-acetyl-L-glutamyl 5-phosphate + ADP. The protein operates within amino-acid biosynthesis; L-arginine biosynthesis; N(2)-acetyl-L-ornithine from L-glutamate: step 2/4. Its function is as follows. Catalyzes the ATP-dependent phosphorylation of N-acetyl-L-glutamate. This Burkholderia thailandensis (strain ATCC 700388 / DSM 13276 / CCUG 48851 / CIP 106301 / E264) protein is Acetylglutamate kinase.